The sequence spans 642 residues: Threonine--tRNA ligase (642 aa).

Residues 1 to 61 (MPIITLPDGS…TEDAELQLIT (61 aa)) enclose the TGS domain. The segment at 242 to 535 (DHRKLGKSLD…LVEHYEGKFP (294 aa)) is catalytic. Residues C333, H384, and H512 each coordinate Zn(2+).

The protein belongs to the class-II aminoacyl-tRNA synthetase family. As to quaternary structure, homodimer. It depends on Zn(2+) as a cofactor.

It is found in the cytoplasm. It catalyses the reaction tRNA(Thr) + L-threonine + ATP = L-threonyl-tRNA(Thr) + AMP + diphosphate + H(+). Catalyzes the attachment of threonine to tRNA(Thr) in a two-step reaction: L-threonine is first activated by ATP to form Thr-AMP and then transferred to the acceptor end of tRNA(Thr). Also edits incorrectly charged L-seryl-tRNA(Thr). The protein is Threonine--tRNA ligase of Hydrogenovibrio crunogenus (strain DSM 25203 / XCL-2) (Thiomicrospira crunogena).